Consider the following 637-residue polypeptide: Biosynthetic arginine decarboxylase (637 aa).

K101 carries the N6-(pyridoxal phosphate)lysine modification. Residue 286–296 (FDVGGGLAVDY) participates in substrate binding.

This sequence belongs to the Orn/Lys/Arg decarboxylase class-II family. SpeA subfamily. Requires Mg(2+) as cofactor. It depends on pyridoxal 5'-phosphate as a cofactor.

The enzyme catalyses L-arginine + H(+) = agmatine + CO2. It functions in the pathway amine and polyamine biosynthesis; agmatine biosynthesis; agmatine from L-arginine: step 1/1. In terms of biological role, catalyzes the biosynthesis of agmatine from arginine. The polypeptide is Biosynthetic arginine decarboxylase (Shewanella halifaxensis (strain HAW-EB4)).